Consider the following 542-residue polypeptide: CTP synthase (542 aa).

The tract at residues 1–265 (MARYVFITGG…DSEVLSAFGI (265 aa)) is amidoligase domain. S13 lines the CTP pocket. S13 contacts UTP. 14–19 (SLGKGI) provides a ligand contact to ATP. Y54 contacts L-glutamine. Residue D71 participates in ATP binding. Mg(2+) contacts are provided by D71 and E139. CTP contacts are provided by residues 146–148 (DIE), 186–191 (KTKPTQ), and K222. UTP-binding positions include 186 to 191 (KTKPTQ) and K222. In terms of domain architecture, Glutamine amidotransferase type-1 spans 291 to 541 (TIAVVGKYTG…IEAAIEQSRL (251 aa)). An L-glutamine-binding site is contributed by G353. C380 serves as the catalytic Nucleophile; for glutamine hydrolysis. L-glutamine-binding positions include 381 to 384 (FGMQ), E404, and R469. Catalysis depends on residues H514 and E516.

Belongs to the CTP synthase family. As to quaternary structure, homotetramer.

The enzyme catalyses UTP + L-glutamine + ATP + H2O = CTP + L-glutamate + ADP + phosphate + 2 H(+). The catalysed reaction is L-glutamine + H2O = L-glutamate + NH4(+). It catalyses the reaction UTP + NH4(+) + ATP = CTP + ADP + phosphate + 2 H(+). It participates in pyrimidine metabolism; CTP biosynthesis via de novo pathway; CTP from UDP: step 2/2. Its activity is regulated as follows. Allosterically activated by GTP, when glutamine is the substrate; GTP has no effect on the reaction when ammonia is the substrate. The allosteric effector GTP functions by stabilizing the protein conformation that binds the tetrahedral intermediate(s) formed during glutamine hydrolysis. Inhibited by the product CTP, via allosteric rather than competitive inhibition. Catalyzes the ATP-dependent amination of UTP to CTP with either L-glutamine or ammonia as the source of nitrogen. Regulates intracellular CTP levels through interactions with the four ribonucleotide triphosphates. The sequence is that of CTP synthase from Brucella melitensis biotype 1 (strain ATCC 23456 / CCUG 17765 / NCTC 10094 / 16M).